A 466-amino-acid chain; its full sequence is tRNA(Ile)-lysidine synthase (466 aa).

42–47 (SGGVDS) serves as a coordination point for ATP.

The protein belongs to the tRNA(Ile)-lysidine synthase family.

The protein resides in the cytoplasm. The catalysed reaction is cytidine(34) in tRNA(Ile2) + L-lysine + ATP = lysidine(34) in tRNA(Ile2) + AMP + diphosphate + H(+). Functionally, ligates lysine onto the cytidine present at position 34 of the AUA codon-specific tRNA(Ile) that contains the anticodon CAU, in an ATP-dependent manner. Cytidine is converted to lysidine, thus changing the amino acid specificity of the tRNA from methionine to isoleucine. The sequence is that of tRNA(Ile)-lysidine synthase from Anaplasma marginale (strain St. Maries).